The chain runs to 103 residues: Small ribosomal subunit protein uS10 (103 aa).

It belongs to the universal ribosomal protein uS10 family. Part of the 30S ribosomal subunit.

Functionally, involved in the binding of tRNA to the ribosomes. This chain is Small ribosomal subunit protein uS10, found in Xylella fastidiosa (strain 9a5c).